Reading from the N-terminus, the 436-residue chain is Antilisterial bacteriocin subtilosin biosynthesis protein AlbD (436 aa).

Helical transmembrane passes span 27 to 47 (IAAG…QAGI), 51 to 71 (VLGK…MVFL), 112 to 132 (TLFF…SGAQ), 134 to 154 (LFWL…GVML), 166 to 186 (FLLH…MPAV), 187 to 207 (TIPL…PVFL), 240 to 260 (AMLL…FQMM), 270 to 290 (IYIV…LYSI), 315 to 335 (FYSG…GFIS), and 395 to 415 (ATLA…LIIV).

The protein resides in the cell membrane. Functionally, involved in the production of the bacteriocin subtilosin. Required for immunity to subtilosin. This Bacillus subtilis protein is Antilisterial bacteriocin subtilosin biosynthesis protein AlbD (albD).